The chain runs to 189 residues: Putative nucleotidase BC_3386 (189 aa).

The protein belongs to the 5'(3')-deoxyribonucleotidase family.

In Bacillus cereus (strain ATCC 14579 / DSM 31 / CCUG 7414 / JCM 2152 / NBRC 15305 / NCIMB 9373 / NCTC 2599 / NRRL B-3711), this protein is Putative nucleotidase BC_3386.